The sequence spans 378 residues: Polygalacturonase (378 aa).

An N-terminal signal peptide occupies residues 1–20; that stretch reads MILTRSVVLGFLGSASLALA. A disulfide bridge connects residues cysteine 39 and cysteine 57. PbH1 repeat units follow at residues 172-203, 204-225, 226-246, 255-276, and 284-306; these read SSGL…DIGD, SDSI…AINS, GTNI…SIGS, VETV…RVKA, and IKGV…TIRQ. Catalysis depends on aspartate 218, which acts as the Proton donor. Cysteine 220 and cysteine 236 form a disulfide bridge. Residue histidine 240 is part of the active site. 2 disulfides stabilise this stretch: cysteine 346–cysteine 352 and cysteine 370–cysteine 378.

It belongs to the glycosyl hydrolase 28 family.

The protein resides in the secreted. The catalysed reaction is (1,4-alpha-D-galacturonosyl)n+m + H2O = (1,4-alpha-D-galacturonosyl)n + (1,4-alpha-D-galacturonosyl)m.. This Penicillium expansum (Blue mold rot fungus) protein is Polygalacturonase (PEPG1).